A 215-amino-acid chain; its full sequence is Cytochrome c biogenesis ATP-binding export protein CcmA (215 aa).

One can recognise an ABC transporter domain in the interval 3–211 (LTAENLAARR…KMTGFAGVDR (209 aa)). 35–42 (GRNGSGKS) contacts ATP.

It belongs to the ABC transporter superfamily. CcmA exporter (TC 3.A.1.107) family. The complex is composed of two ATP-binding proteins (CcmA) and two transmembrane proteins (CcmB).

The protein resides in the cell inner membrane. It catalyses the reaction heme b(in) + ATP + H2O = heme b(out) + ADP + phosphate + H(+). Its function is as follows. Part of the ABC transporter complex CcmAB involved in the biogenesis of c-type cytochromes; once thought to export heme, this seems not to be the case, but its exact role is uncertain. Responsible for energy coupling to the transport system. The protein is Cytochrome c biogenesis ATP-binding export protein CcmA of Rhizobium etli (strain ATCC 51251 / DSM 11541 / JCM 21823 / NBRC 15573 / CFN 42).